Consider the following 916-residue polypeptide: Probable serine/threonine-protein kinase DDB_G0267514 (916 aa).

Disordered stretches follow at residues 283 to 311, 461 to 518, and 550 to 646; these read SGGG…SGGS, NNNQ…SPLD, and FNNQ…EPPS. Low complexity-rich tracts occupy residues 461 to 493 and 550 to 622; these read NNNQ…QQQP and FNNQ…LINN. A compositionally biased stretch (polar residues) spans 623 to 646; sequence HSPNQYNNQGNILKNSGSVVEPPS. Residues 662-916 enclose the Protein kinase domain; the sequence is LKISSKLGEG…EILNLLNEIP (255 aa). Residues 668–676 and Lys689 each bind ATP; that span reads LGEGTFGVV. The active-site Proton acceptor is the Asp784.

Belongs to the protein kinase superfamily. TKL Ser/Thr protein kinase family.

It carries out the reaction L-seryl-[protein] + ATP = O-phospho-L-seryl-[protein] + ADP + H(+). The catalysed reaction is L-threonyl-[protein] + ATP = O-phospho-L-threonyl-[protein] + ADP + H(+). This is Probable serine/threonine-protein kinase DDB_G0267514 from Dictyostelium discoideum (Social amoeba).